Reading from the N-terminus, the 75-residue chain is Notewaprin-b (75 aa).

The signal sequence occupies residues Met-1–Ser-24. In terms of domain architecture, WAP spans Arg-27 to Ile-72. 4 disulfide bridges follow: Cys-34/Cys-60, Cys-43/Cys-64, Cys-47/Cys-59, and Cys-53/Cys-68.

The protein belongs to the venom waprin family. Expressed by the venom gland.

The protein resides in the secreted. Its function is as follows. Damages membranes of susceptible bacteria. Has no hemolytic activity. Not toxic to mice. Does not inhibit the proteinases elastase and cathepsin G. This chain is Notewaprin-b, found in Notechis scutatus scutatus (Mainland tiger snake).